The following is an 841-amino-acid chain: DNA ligase (841 aa).

NAD(+) is bound by residues 54–58 (DAEYD), 103–104 (SL), and E143. K145 (N6-AMP-lysine intermediate) is an active-site residue. 4 residues coordinate NAD(+): R166, E203, K321, and K345. Zn(2+) is bound by residues C471, C474, C489, and C495. Residues 554 to 575 (KTVAESDQMPSEGSSVGASGKH) are disordered. The segment covering 561–570 (QMPSEGSSVG) has biased composition (polar residues). The 78-residue stretch at 764 to 841 (GINKAVAGKT…SEAELLTLLG (78 aa)) folds into the BRCT domain.

Belongs to the NAD-dependent DNA ligase family. LigA subfamily. Mg(2+) serves as cofactor. Mn(2+) is required as a cofactor.

The catalysed reaction is NAD(+) + (deoxyribonucleotide)n-3'-hydroxyl + 5'-phospho-(deoxyribonucleotide)m = (deoxyribonucleotide)n+m + AMP + beta-nicotinamide D-nucleotide.. In terms of biological role, DNA ligase that catalyzes the formation of phosphodiester linkages between 5'-phosphoryl and 3'-hydroxyl groups in double-stranded DNA using NAD as a coenzyme and as the energy source for the reaction. It is essential for DNA replication and repair of damaged DNA. The polypeptide is DNA ligase (Neisseria meningitidis serogroup C / serotype 2a (strain ATCC 700532 / DSM 15464 / FAM18)).